Consider the following 404-residue polypeptide: Dihydroorotase (404 aa).

Zn(2+) contacts are provided by histidine 57 and histidine 59. Substrate contacts are provided by residues 59 to 61 and asparagine 91; that span reads HLR. Zn(2+) contacts are provided by lysine 135, histidine 164, histidine 204, and aspartate 272. Position 135 is an N6-carboxylysine (lysine 135). Aspartate 272 is an active-site residue. Substrate is bound by residues histidine 276 and 286-287; that span reads AG.

It belongs to the metallo-dependent hydrolases superfamily. DHOase family. Class I DHOase subfamily. Requires Zn(2+) as cofactor.

The enzyme catalyses (S)-dihydroorotate + H2O = N-carbamoyl-L-aspartate + H(+). Its pathway is pyrimidine metabolism; UMP biosynthesis via de novo pathway; (S)-dihydroorotate from bicarbonate: step 3/3. Its function is as follows. Catalyzes the reversible cyclization of carbamoyl aspartate to dihydroorotate. This chain is Dihydroorotase, found in Pyrococcus abyssi (strain GE5 / Orsay).